A 361-amino-acid chain; its full sequence is uncharacterized protein (361 aa).

2 disordered regions span residues 53-75 and 150-211; these read KNIS…NINN and NYNN…YHHY. Residues 150–198 show a composition bias toward low complexity; sequence NYNNYNNNNNNNNNNNNNNNNNNNNNNNNNNNNNNKNNNKNNNNKPNNF. Positions 199-211 are enriched in basic residues; sequence IHHHHHHHHYHHY. Residues 225–245 traverse the membrane as a helical segment; sequence IFIGLMAFLILFILMVIGLLI.

The protein localises to the membrane. This is an uncharacterized protein from Dictyostelium discoideum (Social amoeba).